The primary structure comprises 426 residues: MIRKEMIAMLLAGGQGSRLGVLTKNVAKPAVLYGGKYRIIDFSLSNCTNSGIDTVGVLTQYQPLKLNAHIGIGKPWDMDRIDGGVTILSPYLKAEMGEWFKGTANAVYQNIQYIDKYSPHYVIILSGDHIYKMDYSKMLDFHKENHADATISVINVPYEEASRYGIMNCHENGKIYEFEEKPKNPKSTLASMGVYIFTWSTLREYLIKDNECSDSVNDFGKNIIPAMLGDGKSMWAYQYSGYWRDVGTIQAFWESNMDLVSRVPQFNLFDPEWRIYTPNPVKPAHYIASSACVKKSIIAEGCSVHGTVINSILFPGAYIEEGAVIQDSIIMSNSRVCKNAYINRSIISEQAIIGEKARLGEGPDVPNEYKPGIYDSGITVVGEKSSIPADAVIGKNVMIDIGASAVDFTSLNVQSGKSVFKGGVAE.

Residues G165, 180–181 (EK), and S191 contribute to the alpha-D-glucose 1-phosphate site.

Belongs to the bacterial/plant glucose-1-phosphate adenylyltransferase family. As to quaternary structure, homotetramer.

The catalysed reaction is alpha-D-glucose 1-phosphate + ATP + H(+) = ADP-alpha-D-glucose + diphosphate. It participates in glycan biosynthesis; glycogen biosynthesis. Involved in the biosynthesis of ADP-glucose, a building block required for the elongation reactions to produce glycogen. Catalyzes the reaction between ATP and alpha-D-glucose 1-phosphate (G1P) to produce pyrophosphate and ADP-Glc. In Ruminiclostridium cellulolyticum (strain ATCC 35319 / DSM 5812 / JCM 6584 / H10) (Clostridium cellulolyticum), this protein is Glucose-1-phosphate adenylyltransferase.